A 241-amino-acid chain; its full sequence is Octanoyltransferase (241 aa).

The region spanning 43-228 (AETPDEIWLV…CLTANLDGSP (186 aa)) is the BPL/LPL catalytic domain. Substrate is bound by residues 83 to 90 (RGGQITYH), 159 to 161 (ALG), and 172 to 174 (GVS). The active-site Acyl-thioester intermediate is Cys190.

The protein belongs to the LipB family.

Its subcellular location is the cytoplasm. It catalyses the reaction octanoyl-[ACP] + L-lysyl-[protein] = N(6)-octanoyl-L-lysyl-[protein] + holo-[ACP] + H(+). Its pathway is protein modification; protein lipoylation via endogenous pathway; protein N(6)-(lipoyl)lysine from octanoyl-[acyl-carrier-protein]: step 1/2. In terms of biological role, catalyzes the transfer of endogenously produced octanoic acid from octanoyl-acyl-carrier-protein onto the lipoyl domains of lipoate-dependent enzymes. Lipoyl-ACP can also act as a substrate although octanoyl-ACP is likely to be the physiological substrate. The sequence is that of Octanoyltransferase from Paraburkholderia xenovorans (strain LB400).